The following is a 360-amino-acid chain: Photosystem II protein D1 (360 aa).

A run of 3 helical transmembrane segments spans residues 29 to 46 (YIGWFGVIMIPTLLTATT), 118 to 133 (HFLLGVFCYLGRQWEL), and 142 to 156 (WICVAYSAPVSAATA). Residue His-118 participates in chlorophyll a binding. Tyr-126 serves as a coordination point for pheophytin a. The [CaMn4O5] cluster site is built by Asp-170 and Glu-189. Residues 197–218 (FHMLGVAGVFGGSLFSAMHGSL) traverse the membrane as a helical segment. His-198 provides a ligand contact to chlorophyll a. A quinone contacts are provided by residues His-215 and 264 to 265 (SF). His-215 is a binding site for Fe cation. Residue His-272 participates in Fe cation binding. Residues 274-288 (FLGAWPVIGIWFTAM) form a helical membrane-spanning segment. The [CaMn4O5] cluster site is built by His-332, Glu-333, Asp-342, and Ala-344. Residues 345–360 (SGEQAPVALIAPAING) constitute a propeptide that is removed on maturation.

It belongs to the reaction center PufL/M/PsbA/D family. In terms of assembly, PSII is composed of 1 copy each of membrane proteins PsbA, PsbB, PsbC, PsbD, PsbE, PsbF, PsbH, PsbI, PsbJ, PsbK, PsbL, PsbM, PsbT, PsbX, PsbY, PsbZ, Psb30/Ycf12, peripheral proteins PsbO, CyanoQ (PsbQ), PsbU, PsbV and a large number of cofactors. It forms dimeric complexes. The D1/D2 heterodimer binds P680, chlorophylls that are the primary electron donor of PSII, and subsequent electron acceptors. It shares a non-heme iron and each subunit binds pheophytin, quinone, additional chlorophylls, carotenoids and lipids. D1 provides most of the ligands for the Mn4-Ca-O5 cluster of the oxygen-evolving complex (OEC). There is also a Cl(-1) ion associated with D1 and D2, which is required for oxygen evolution. The PSII complex binds additional chlorophylls, carotenoids and specific lipids. serves as cofactor. Tyr-161 forms a radical intermediate that is referred to as redox-active TyrZ, YZ or Y-Z. In terms of processing, C-terminally processed by CtpA; processing is essential to allow assembly of the oxygen-evolving complex and thus photosynthetic growth.

It localises to the cellular thylakoid membrane. The enzyme catalyses 2 a plastoquinone + 4 hnu + 2 H2O = 2 a plastoquinol + O2. Photosystem II (PSII) is a light-driven water:plastoquinone oxidoreductase that uses light energy to abstract electrons from H(2)O, generating O(2) and a proton gradient subsequently used for ATP formation. It consists of a core antenna complex that captures photons, and an electron transfer chain that converts photonic excitation into a charge separation. The D1/D2 (PsbA/PsbD) reaction center heterodimer binds P680, the primary electron donor of PSII as well as several subsequent electron acceptors. This Microcystis aeruginosa (strain NIES-843 / IAM M-2473) protein is Photosystem II protein D1.